The sequence spans 351 residues: Anthranilate phosphoribosyltransferase (351 aa).

Residues G80, 83–84, T88, 90–93, 108–116, and S120 each bind 5-phospho-alpha-D-ribose 1-diphosphate; these read GD, NIST, and KHGNRSITS. Residue G80 coordinates anthranilate. S92 provides a ligand contact to Mg(2+). Residue N111 participates in anthranilate binding. Position 166 (R166) interacts with anthranilate. 2 residues coordinate Mg(2+): D229 and E230.

The protein belongs to the anthranilate phosphoribosyltransferase family. As to quaternary structure, homodimer. It depends on Mg(2+) as a cofactor.

The catalysed reaction is N-(5-phospho-beta-D-ribosyl)anthranilate + diphosphate = 5-phospho-alpha-D-ribose 1-diphosphate + anthranilate. The protein operates within amino-acid biosynthesis; L-tryptophan biosynthesis; L-tryptophan from chorismate: step 2/5. Catalyzes the transfer of the phosphoribosyl group of 5-phosphorylribose-1-pyrophosphate (PRPP) to anthranilate to yield N-(5'-phosphoribosyl)-anthranilate (PRA). In Chlorobaculum parvum (strain DSM 263 / NCIMB 8327) (Chlorobium vibrioforme subsp. thiosulfatophilum), this protein is Anthranilate phosphoribosyltransferase.